A 58-amino-acid polypeptide reads, in one-letter code: uncharacterized protein (58 aa).

It is found in the plastid. Its subcellular location is the chloroplast. This is an uncharacterized protein from Chlamydomonas reinhardtii (Chlamydomonas smithii).